The sequence spans 122 residues: UPF0102 protein RHECIAT_CH0000358 (122 aa).

The protein belongs to the UPF0102 family.

This is UPF0102 protein RHECIAT_CH0000358 from Rhizobium etli (strain CIAT 652).